Reading from the N-terminus, the 88-residue chain is Large ribosomal subunit protein bL27 (88 aa).

The tract at residues M1 to Y26 is disordered.

Belongs to the bacterial ribosomal protein bL27 family.

This Prochlorococcus marinus (strain MIT 9211) protein is Large ribosomal subunit protein bL27.